The sequence spans 130 residues: Glycine cleavage system H protein (130 aa).

One can recognise a Lipoyl-binding domain in the interval 22–103; that stretch reads QAWIGISDYA…PYANYIVVVA (82 aa). Lysine 63 is subject to N6-lipoyllysine.

The protein belongs to the GcvH family. As to quaternary structure, the glycine cleavage system is composed of four proteins: P, T, L and H. It depends on (R)-lipoate as a cofactor.

Functionally, the glycine cleavage system catalyzes the degradation of glycine. The H protein shuttles the methylamine group of glycine from the P protein to the T protein. The protein is Glycine cleavage system H protein of Syntrophomonas wolfei subsp. wolfei (strain DSM 2245B / Goettingen).